Reading from the N-terminus, the 365-residue chain is tRNA (guanine(6)-N2)-methyltransferase (365 aa).

A THUMP domain is found at 69 to 182; sequence NENSRLLHRV…KDVFFLGIDT (114 aa). Residues 198-202, 228-230, E248, 276-277, and N293 contribute to the S-adenosyl-L-methionine site; these read HPAHL, SGT, and DA.

The protein belongs to the methyltransferase superfamily. Monomer in solution.

The protein localises to the cytoplasm. It carries out the reaction guanosine(6) in tRNA + S-adenosyl-L-methionine = N(2)-methylguanosine(6) in tRNA + S-adenosyl-L-homocysteine + H(+). In terms of biological role, S-adenosyl-L-methionine-dependent methyltransferase that catalyzes the methylation of the guanosine nucleotide at position 6 (m2G6) in tRNA(Phe). This chain is tRNA (guanine(6)-N2)-methyltransferase, found in Pyrococcus furiosus (strain ATCC 43587 / DSM 3638 / JCM 8422 / Vc1).